Here is a 330-residue protein sequence, read N- to C-terminus: 2-methyl-6-phytyl-1,4-hydroquinone methyltransferase 1, chloroplastic (330 aa).

The transit peptide at Met1–Lys45 directs the protein to the chloroplast. Over Cys46–Thr295 the chain is Chloroplast intermembrane. Residues Val107 to Phe116 are SAM motif I. The tract at residues Val152–Pro165 is SAM motif II. The tract at residues Arg193–Pro206 is SAM motif III. Residues Phe296–Tyr316 traverse the membrane as a helical segment. At Met317–Ile330 the chain is on the stromal side.

The protein belongs to the class I-like SAM-binding methyltransferase superfamily. MPBQ/MBSQ MT family.

Its subcellular location is the plastid. The protein localises to the chloroplast inner membrane. It catalyses the reaction 2-methyl-6-phytyl-1,4-benzene-1,4-diol + S-adenosyl-L-methionine = 2,3-dimethyl-6-phytylbenzene-1,4-diol + S-adenosyl-L-homocysteine + H(+). It carries out the reaction 2-methyl-6-(all-trans-nonaprenyl)benzene-1,4-diol + S-adenosyl-L-methionine = plastoquinol-9 + S-adenosyl-L-homocysteine + H(+). The catalysed reaction is 6-geranylgeranyl-2-methylbenzene-1,4-diol + S-adenosyl-L-methionine = 6-geranylgeranyl-2,3-dimethylbenzene-1,4-diol + S-adenosyl-L-homocysteine + H(+). The protein operates within cofactor biosynthesis; tocopherol biosynthesis. Involved in a key methylation step in both tocopherols (vitamin E) and plastoquinone synthesis. Catalyzes the conversion of 2-methyl-6-phytyl-1,4-hydroquinone (MPBQ) to 2,3-dimethyl-6-phytyl-1,4-hydroquinone (DMPQ, a substrate for tocopherol cyclase), and 2-methyl-6-solanyl-1,4-benzoquinone (MSBQ) to plastoquinone. The polypeptide is 2-methyl-6-phytyl-1,4-hydroquinone methyltransferase 1, chloroplastic (ARSM2) (Oryza sativa subsp. japonica (Rice)).